A 114-amino-acid polypeptide reads, in one-letter code: IVMTQTPSSKSVPVGDTVTINCQAAQSVYSNNRLSWFQQKPGQPPKGLIYYASTLASGVQQDPSRFKGSGSGTQFTLTISDVQCBBAATVYYCQGYKSSDTRAFGGGTEVVVKG.

A framework-1 region spans residues I1–C22. A complementarity-determining-1 region spans residues Q23–S35. Residues W36 to Y50 form a framework-2 region. Positions Y51–S57 are complementarity-determining-2. Residues G58–C93 form a framework-3 region. A complementarity-determining-3 region spans residues Q94–A103. The interval F104 to K113 is framework-4.

The protein is Ig kappa chain V region AH80-5 of Oryctolagus cuniculus (Rabbit).